The sequence spans 306 residues: Methionyl-tRNA formyltransferase (306 aa).

A (6S)-5,6,7,8-tetrahydrofolate-binding site is contributed by 108 to 111 (SLLP).

It belongs to the Fmt family.

It catalyses the reaction L-methionyl-tRNA(fMet) + (6R)-10-formyltetrahydrofolate = N-formyl-L-methionyl-tRNA(fMet) + (6S)-5,6,7,8-tetrahydrofolate + H(+). Functionally, attaches a formyl group to the free amino group of methionyl-tRNA(fMet). The formyl group appears to play a dual role in the initiator identity of N-formylmethionyl-tRNA by promoting its recognition by IF2 and preventing the misappropriation of this tRNA by the elongation apparatus. This Pseudarthrobacter chlorophenolicus (strain ATCC 700700 / DSM 12829 / CIP 107037 / JCM 12360 / KCTC 9906 / NCIMB 13794 / A6) (Arthrobacter chlorophenolicus) protein is Methionyl-tRNA formyltransferase.